We begin with the raw amino-acid sequence, 314 residues long: tRNA dimethylallyltransferase 1 (314 aa).

Residue 8–15 (GPTGSGKS) participates in ATP binding. 10 to 15 (TGSGKS) serves as a coordination point for substrate.

Belongs to the IPP transferase family. Monomer. Requires Mg(2+) as cofactor.

The catalysed reaction is adenosine(37) in tRNA + dimethylallyl diphosphate = N(6)-dimethylallyladenosine(37) in tRNA + diphosphate. Catalyzes the transfer of a dimethylallyl group onto the adenine at position 37 in tRNAs that read codons beginning with uridine, leading to the formation of N6-(dimethylallyl)adenosine (i(6)A). The sequence is that of tRNA dimethylallyltransferase 1 from Mycobacterium ulcerans (strain Agy99).